Reading from the N-terminus, the 129-residue chain is UPF0225 protein XOO0258 (129 aa).

This sequence belongs to the UPF0225 family.

The polypeptide is UPF0225 protein XOO0258 (Xanthomonas oryzae pv. oryzae (strain MAFF 311018)).